Reading from the N-terminus, the 1061-residue chain is Zinc finger protein ZFPM1 (1061 aa).

The CCHC FOG-type 1 zinc finger occupies 152–185; sequence VVNKDVFPCKDCGIWYRSERNLQAHLMYYCASRQ. Zn(2+) contacts are provided by Cys160, Cys163, His176, and Cys181. 3 consecutive C2H2-type zinc fingers follow at residues 204 to 228, 234 to 256, and 262 to 285; these read RICPFPQCKKSCPSTSSLEIHMRSH, FVCLICLSAFTTKANCERHLKVH, and GVCHGCGFISTTRDILYSHLVTNH. Disordered regions lie at residues 349–393 and 435–455; these read PSAT…SEET and TEMSSPTPGSSPVPNETGAAT. Positions 378 to 388 are enriched in low complexity; it reads SPISSSSSASS. A compositionally biased stretch (polar residues) spans 436–448; sequence EMSSPTPGSSPVP. The CCHC FOG-type 2 zinc-finger motif lies at 508–541; the sequence is SAVPKGATCFECEITFNNINNYYVHKRLYCSGRH. Positions 516, 519, 532, and 537 each coordinate Zn(2+). Disordered stretches follow at residues 561-586 and 599-630; these read ALASGFSSTEQEASPPQEDAGEESSA and MDCEGAGSGHVSEGSQSPSSLDDPEEDPNRTV. The segment covering 565-574 has biased composition (polar residues); that stretch reads GFSSTEQEAS. The CCHC FOG-type 3 zinc finger occupies 623 to 656; it reads EEDPNRTVCGACNIRFSRHETYVVHKRYYCASRH. The Zn(2+) site is built by Cys631, Cys634, His647, and Cys652. The tract at residues 661 to 681 is disordered; the sequence is RRREVNKPGPPYTTQPTPRTR. Residues 736 to 742 are interaction with CTBP; it reads PIDLSKK. The CCHC FOG-type 4 zinc finger occupies 759 to 792; sequence APLADYHECTACRISFNSLESYLAHKKFSCPTAP. Cys767, Cys770, His783, and Cys788 together coordinate Zn(2+). The C2H2-type 4 zinc-finger motif lies at 869 to 892; sequence TTCPYCPHNVIIRGDLLEHFRSVH. The segment at 917 to 1021 is disordered; that stretch reads RGQTSSASEN…MQPPKPSLIS (105 aa). Composition is skewed to low complexity over residues 933–942 and 954–972; these read VSSASPLQLP and TTSSSSSVNGSPILTSTPR. The segment covering 973–984 has biased composition (pro residues); that stretch reads PLLPTSPAPPSN. A CCHC FOG-type 5 zinc finger spans residues 1023–1056; sequence VPNGNHRYCRLCNIKFSSLSTFIAHKKYYCSSHA. Zn(2+) contacts are provided by Cys1031, Cys1034, His1047, and Cys1052.

The protein belongs to the FOG (Friend of GATA) family. In terms of assembly, interacts with corepressor CTBP. Interacts with the N-terminal zinc-finger of GATA1 and probably GATA2. As to expression, predominantly expressed in heart and brain. Also expressed in ventral blood island and adult spleen.

The protein localises to the nucleus. In terms of biological role, transcription regulator that plays an central role in red blood cell differentiation. Essential cofactor that acts via the formation of a heterodimer with transcription factors of the GATA family GATA1 and GATA2. Such heterodimer can both activate or repress transcriptional activity, depending on the cell and promoter context. Acts as a repressor of red blood cells, probably by modulating activity of GATA1. The protein is Zinc finger protein ZFPM1 (zfpm1) of Xenopus laevis (African clawed frog).